We begin with the raw amino-acid sequence, 377 residues long: Erythronate-4-phosphate dehydrogenase (377 aa).

Substrate is bound by residues S45 and T67. NAD(+) contacts are provided by residues Q127–V128, D147, and T176. The active site involves R209. D233 is a binding site for NAD(+). E238 is a catalytic residue. Catalysis depends on H255, which acts as the Proton donor. Residue G258 participates in NAD(+) binding. Residue Y259 coordinates substrate.

The protein belongs to the D-isomer specific 2-hydroxyacid dehydrogenase family. PdxB subfamily. In terms of assembly, homodimer.

It is found in the cytoplasm. The catalysed reaction is 4-phospho-D-erythronate + NAD(+) = (R)-3-hydroxy-2-oxo-4-phosphooxybutanoate + NADH + H(+). It participates in cofactor biosynthesis; pyridoxine 5'-phosphate biosynthesis; pyridoxine 5'-phosphate from D-erythrose 4-phosphate: step 2/5. Catalyzes the oxidation of erythronate-4-phosphate to 3-hydroxy-2-oxo-4-phosphonooxybutanoate. In Vibrio vulnificus (strain YJ016), this protein is Erythronate-4-phosphate dehydrogenase.